The chain runs to 620 residues: Glutathione-regulated potassium-efflux system protein KefC (620 aa).

12 helical membrane-spanning segments follow: residues 4–24 (HTLIQALIYLGSAALIVPVAV), 26–46 (LGLGSVLGYLIAGGLIGPWGL), 54–74 (AILHFAEIGVVLMLFVIGLEL), 86–106 (VFGGGALQMGACGLLLGGFCV), 114–134 (VALLIGLTLALSSTAIAMQAM), 149–169 (FAVLLFQDIAAIPLVAMIPLL), 178–198 (ASAFFLSALKVVGALALVVLL), 218–238 (VFSAVALFLVFGFGLLLEEAG), 271–291 (LLLGLFFIGVGMSIDFGTLVA), 296–316 (VLTLLFGFLIIKTVTLWLVAK), 326–346 (RWFAVLLGQGSEFAFVIFGAA), and 359–379 (ALTLAVALSMAATPLLLVLLT). The RCK N-terminal domain occupies 399-518 (QPRVIIAGFG…AGVAQPERET (120 aa)). Residues 596 to 620 (HGWQGTREGKHTGNDADEPEVKPQP) are disordered.

Belongs to the monovalent cation:proton antiporter 2 (CPA2) transporter (TC 2.A.37) family. KefC subfamily. As to quaternary structure, homodimer. Interacts with the regulatory subunit KefF.

Its subcellular location is the cell inner membrane. In terms of biological role, pore-forming subunit of a potassium efflux system that confers protection against electrophiles. Catalyzes K(+)/H(+) antiport. The protein is Glutathione-regulated potassium-efflux system protein KefC of Cronobacter sakazakii (strain ATCC BAA-894) (Enterobacter sakazakii).